Reading from the N-terminus, the 152-residue chain is Ribosome maturation factor RimP (152 aa).

This sequence belongs to the RimP family.

It localises to the cytoplasm. In terms of biological role, required for maturation of 30S ribosomal subunits. This Paraburkholderia phymatum (strain DSM 17167 / CIP 108236 / LMG 21445 / STM815) (Burkholderia phymatum) protein is Ribosome maturation factor RimP.